Here is a 156-residue protein sequence, read N- to C-terminus: Ribosome maturation factor RimP (156 aa).

Belongs to the RimP family.

It localises to the cytoplasm. In terms of biological role, required for maturation of 30S ribosomal subunits. This chain is Ribosome maturation factor RimP, found in Oceanobacillus iheyensis (strain DSM 14371 / CIP 107618 / JCM 11309 / KCTC 3954 / HTE831).